Consider the following 442-residue polypeptide: Cyclic 2,3-diphosphoglycerate synthetase (442 aa).

Belongs to the cyclic 2,3-diphosphoglycerate synthetase family.

It is found in the cytoplasm. It catalyses the reaction (2R)-2,3-bisphosphoglycerate + ATP + H(+) = cyclic (2R)-2,3-bisphosphoglycerate + ADP + phosphate. Catalyzes the formation of cyclic 2,3-diphosphoglycerate (cDPG) by formation of an intramolecular phosphoanhydride bond at the expense of ATP. This is Cyclic 2,3-diphosphoglycerate synthetase from Rubrobacter xylanophilus (strain DSM 9941 / JCM 11954 / NBRC 16129 / PRD-1).